A 506-amino-acid polypeptide reads, in one-letter code: CTL-like protein DDB_G0269978 (506 aa).

N-linked (GlcNAc...) asparagine glycosylation is found at asparagine 15 and asparagine 41. 12 consecutive transmembrane segments (helical) span residues 91–111 (LLYS…TVIA), 126–146 (LQGL…FLIW), 161–181 (SFFS…GNGW), 182–202 (YSWA…YFAF), 226–246 (TLLV…IWLF), 256–276 (SYWT…LYWT), 279–299 (VITY…YFFA), 323–343 (FGSI…QFIC), 345–367 (GFAR…ALIF), 371–393 (LYTF…CNSS), 416–436 (ITML…VTMI), and 447–467 (WLYV…DIIF).

This sequence belongs to the CTL (choline transporter-like) family.

Its subcellular location is the membrane. This is CTL-like protein DDB_G0269978 from Dictyostelium discoideum (Social amoeba).